The sequence spans 542 residues: CTP synthase (542 aa).

Positions 1–265 (MTAFIFITGG…GRMLTELLKV (265 aa)) are amidoligase domain. Ser13 is a binding site for CTP. Residue Ser13 participates in UTP binding. 14–19 (SVGKGI) provides a ligand contact to ATP. Tyr54 serves as a coordination point for L-glutamine. Asp71 contacts ATP. Residues Asp71 and Glu140 each contribute to the Mg(2+) site. Residues 147-149 (DYE), 186-191 (KTKPLQ), and Lys222 each bind CTP. UTP contacts are provided by residues 186–191 (KTKPLQ) and Lys222. The Glutamine amidotransferase type-1 domain occupies 297–532 (YVKLRDAYIS…LKAALARKMG (236 aa)). Residue Gly352 coordinates L-glutamine. Catalysis depends on Cys379, which acts as the Nucleophile; for glutamine hydrolysis. Residues 380–383 (YGMQ), Glu403, and Arg460 contribute to the L-glutamine site. Active-site residues include His505 and Glu507.

The protein belongs to the CTP synthase family. As to quaternary structure, homotetramer.

The enzyme catalyses UTP + L-glutamine + ATP + H2O = CTP + L-glutamate + ADP + phosphate + 2 H(+). It carries out the reaction L-glutamine + H2O = L-glutamate + NH4(+). The catalysed reaction is UTP + NH4(+) + ATP = CTP + ADP + phosphate + 2 H(+). It participates in pyrimidine metabolism; CTP biosynthesis via de novo pathway; CTP from UDP: step 2/2. With respect to regulation, allosterically activated by GTP, when glutamine is the substrate; GTP has no effect on the reaction when ammonia is the substrate. The allosteric effector GTP functions by stabilizing the protein conformation that binds the tetrahedral intermediate(s) formed during glutamine hydrolysis. Inhibited by the product CTP, via allosteric rather than competitive inhibition. Catalyzes the ATP-dependent amination of UTP to CTP with either L-glutamine or ammonia as the source of nitrogen. Regulates intracellular CTP levels through interactions with the four ribonucleotide triphosphates. The chain is CTP synthase from Caldivirga maquilingensis (strain ATCC 700844 / DSM 13496 / JCM 10307 / IC-167).